The following is a 101-amino-acid chain: Small ribosomal subunit protein uS14 (101 aa).

Residues 1-20 (MAKTSQVNRNKRREKMAARD) are disordered.

Belongs to the universal ribosomal protein uS14 family. In terms of assembly, part of the 30S ribosomal subunit. Contacts proteins S3 and S10.

Binds 16S rRNA, required for the assembly of 30S particles and may also be responsible for determining the conformation of the 16S rRNA at the A site. This Acidiphilium cryptum (strain JF-5) protein is Small ribosomal subunit protein uS14.